The following is a 336-amino-acid chain: Inactive serine/threonine-protein kinase BKN2 (336 aa).

Positions 1 to 25 (MGNCLKPLKEQPPSASPKPLTIPSS) are disordered. Glycine 2 carries N-myristoyl glycine lipidation. Cysteine 4 carries S-palmitoyl cysteine lipidation. Residues 52-332 (YMVIKGNDNG…QVFDGLNDIA (281 aa)) enclose the Protein kinase domain.

Belongs to the protein kinase superfamily. Ser/Thr protein kinase family. Component of an immune signaling complex made of, at least, SZE1, BKN2/SZE2, ZAR1 and ZED1. Interacts directly with ZAR1 and Pseudomonas syringae HOPZ1A at the plasma membrane. N-terminal myristoylation is critical for plasma membrane localization and implication in defense responses. As to expression, expressed in stigma and ovaries in flowers, and in stems and seedlings.

It localises to the cell membrane. In terms of biological role, together with SZE1 and ZED1, required for effector-triggered immunity (e.g. Pseudomonas syringae type III effector HopZ1a) via the activation of ZAR1, thus being essential for resistance against P. syringae pv. tomato DC3000 expressing HopZ1a. Collaboratively with BKN1, involved in compatible pollen-stigma interactions. This chain is Inactive serine/threonine-protein kinase BKN2, found in Arabidopsis thaliana (Mouse-ear cress).